The following is a 100-amino-acid chain: Large ribosomal subunit protein uL23 (100 aa).

This sequence belongs to the universal ribosomal protein uL23 family. In terms of assembly, part of the 50S ribosomal subunit. Contacts protein L29, and trigger factor when it is bound to the ribosome.

Functionally, one of the early assembly proteins it binds 23S rRNA. One of the proteins that surrounds the polypeptide exit tunnel on the outside of the ribosome. Forms the main docking site for trigger factor binding to the ribosome. The sequence is that of Large ribosomal subunit protein uL23 from Lactobacillus acidophilus (strain ATCC 700396 / NCK56 / N2 / NCFM).